Here is a 368-residue protein sequence, read N- to C-terminus: Cobalt-precorrin-5B C(1)-methyltransferase (368 aa).

Belongs to the CbiD family.

It carries out the reaction Co-precorrin-5B + S-adenosyl-L-methionine = Co-precorrin-6A + S-adenosyl-L-homocysteine. It participates in cofactor biosynthesis; adenosylcobalamin biosynthesis; cob(II)yrinate a,c-diamide from sirohydrochlorin (anaerobic route): step 6/10. Catalyzes the methylation of C-1 in cobalt-precorrin-5B to form cobalt-precorrin-6A. This Synechococcus sp. (strain CC9605) protein is Cobalt-precorrin-5B C(1)-methyltransferase.